A 218-amino-acid chain; its full sequence is Akirin (218 aa).

A disordered region spans residues 96 to 150; the sequence is KAIPRSNDFDDDGDQRGDGCSSNYSKAYRAPSSPKSGSDSEGEAPSTSVTDRSSA. Residues 128–147 show a composition bias toward polar residues; it reads SPKSGSDSEGEAPSTSVTDR.

Belongs to the akirin family. As to quaternary structure, interacts with hda-1, a component of the NuRD complex. Interacts with let-418, a component of the NuRD and MEC complexes. Interacts with the transcription factor ceh-18. Interacts with ima-2. As to expression, localizes to somatic tissues throughout the body, including muscle cells. Expressed in lateral epithelial seam cells, the hyp7 epidermal syncytium, and multiple head and tail neurons.

It localises to the nucleus. Molecular adapter that acts as a bridge between a variety of multiprotein complexes, and which is involved in antifungal innate immunity, development of the muscle and sister chromatid cohesion. Plays a role in antifungal innate immunity by acting as a bridge between components of the NuRD (Nucleosome Remodeling and Deacetylase) and MEC chromatin remodeling complexes. NuRD and MEC complexes bind to the promoters of antimicrobial peptide genes and may recruit other proteins such as ceh-18 to control gene expression in response to fungal infection. During meiotic prophase I, plays a role in the disassembly of synaptonemal complex proteins and in the regulation of chromosome condensation and segregation. Together with nuclear import receptor ima-2, required for the import and load of cohesin complex proteins in meiotic nuclei, possibly by acting as a bridge between ima-2 and cohesins. Required for embryonic development of muscle tissue. The chain is Akirin from Caenorhabditis elegans.